A 442-amino-acid polypeptide reads, in one-letter code: ATP-dependent protease ATPase subunit HslU (442 aa).

Residues Ile-18, 60-65, Asp-255, Glu-320, and Arg-392 each bind ATP; that span reads GVGKTE.

The protein belongs to the ClpX chaperone family. HslU subfamily. In terms of assembly, a double ring-shaped homohexamer of HslV is capped on each side by a ring-shaped HslU homohexamer. The assembly of the HslU/HslV complex is dependent on binding of ATP.

It localises to the cytoplasm. In terms of biological role, ATPase subunit of a proteasome-like degradation complex; this subunit has chaperone activity. The binding of ATP and its subsequent hydrolysis by HslU are essential for unfolding of protein substrates subsequently hydrolyzed by HslV. HslU recognizes the N-terminal part of its protein substrates and unfolds these before they are guided to HslV for hydrolysis. The protein is ATP-dependent protease ATPase subunit HslU of Hahella chejuensis (strain KCTC 2396).